A 119-amino-acid polypeptide reads, in one-letter code: Basic phospholipase A2 notechis II-5 (119 aa).

Disulfide bonds link Cys11/Cys71, Cys27/Cys118, Cys29/Cys45, Cys44/Cys99, Cys51/Cys92, Cys60/Cys85, and Cys78/Cys90. Tyr28, Gly30, and Gly32 together coordinate Ca(2+). His48 is an active-site residue. Asp49 lines the Ca(2+) pocket. Asp93 is an active-site residue.

This sequence belongs to the phospholipase A2 family. Group I subfamily. D49 sub-subfamily. It depends on Ca(2+) as a cofactor. Expressed by the venom gland.

It localises to the secreted. The catalysed reaction is a 1,2-diacyl-sn-glycero-3-phosphocholine + H2O = a 1-acyl-sn-glycero-3-phosphocholine + a fatty acid + H(+). In terms of biological role, snake venom phospholipase A2 (PLA2) that inhibits neuromuscular transmission by blocking acetylcholine release from the nerve termini. Notechis II-5 is less toxic than notexin but has a higher specific phospholipase activity. PLA2 catalyzes the calcium-dependent hydrolysis of the 2-acyl groups in 3-sn-phosphoglycerides. In Notechis scutatus scutatus (Mainland tiger snake), this protein is Basic phospholipase A2 notechis II-5.